Reading from the N-terminus, the 533-residue chain is CEP295 N-terminal-like protein (533 aa).

Disordered regions lie at residues 1-40, 84-176, 286-333, and 370-399; these read MQRD…TTLQ, RSMG…RVTR, LKAD…ETTE, and AGTS…LEDE. Residues 40 to 72 adopt a coiled-coil conformation; it reads QQWKARQLQRLAEELKAEWQEARLQQVRQAERL. Over residues 107-126 the composition is skewed to basic and acidic residues; the sequence is KERNRAAFREERGRREEHPR. A coiled-coil region spans residues 416–531; sequence MALRQKQKAE…ARKRLQEFQK (116 aa).

As to expression, expressed in mature spermatozoa (at protein level). Detected in retina, lung and kidney. In brain, highly expressed in brain-stem, cerebral cortex and thalamus with lesser expression in cerebellum and hippocampus.

The protein localises to the cell projection. Its subcellular location is the cilium. The protein is CEP295 N-terminal-like protein of Mus musculus (Mouse).